We begin with the raw amino-acid sequence, 1249 residues long: Pleckstrin homology-like domain family B member 2 (1249 aa).

Disordered regions lie at residues 64 to 85 and 128 to 154; these read QPVSAKRSPSPMGTSVRSSPSL and DHYTGRDSERSTRLSEKPPYSRYSSRN. Serine 71 and serine 73 each carry phosphoserine. Over residues 74–84 the composition is skewed to polar residues; that stretch reads PMGTSVRSSPS. The span at 128 to 143 shows a compositional bias: basic and acidic residues; it reads DHYTGRDSERSTRLSE. A phosphoserine mark is found at serine 156, serine 203, serine 241, and serine 244. Disordered regions lie at residues 190–248 and 264–289; these read SPIS…LSNM and NQMSPLSLPPRSSLGNSRRGQLGEKD. Residues 231–248 show a composition bias toward polar residues; the sequence is ENVSVRTRKYSGSSLSNM. Low complexity predominate over residues 267 to 283; it reads SPLSLPPRSSLGNSRRG. 11 positions are modified to phosphoserine: serine 329, serine 333, serine 347, serine 380, serine 383, serine 389, serine 411, serine 416, serine 465, serine 486, and serine 510. Residues 388-424 are disordered; that stretch reads DSDLESLRQSSETPQPVLRERKSSISSISGRDDLMDY. Phosphothreonine occurs at positions 546 and 570. Coiled-coil stretches lie at residues 580 to 692 and 718 to 803; these read TQEL…LDNC and FEDL…LCNL. The tract at residues 866-934 is disordered; that stretch reads VSQPQSSEHF…LGQSNSCGSV (69 aa). The segment covering 873 to 888 has biased composition (basic and acidic residues); that stretch reads EHFRSLEERKKQHKEG. A Phosphothreonine modification is found at threonine 894. The segment covering 901-919 has biased composition (polar residues); sequence TPSLSPHFSSATMGRSTTP. A coiled-coil region spans residues 1028 to 1094; that stretch reads IARIEEMERL…QKLIEKEVKI (67 aa). Residues 1139–1242 enclose the PH domain; that stretch reads EKTCRGYLIK…WMDVIVTGAE (104 aa).

As to quaternary structure, interacts with FLNC. Interacts with AMOTL2; interaction may facilitate PHLDB2 localization to the myotube podosome cortex that surrounds the core. Part of a cortical microtubule stabilization complex (CMSC) composed of KANK1, PPFIA1, PPFIBP1, ERC1/ELKS, PHLDB2/LL5beta, CLASPs, KIF21A and possibly additional interactors; within CMSCs KANK1 and PHLDB2/LL5beta appear to be the core components for targeting of microtubule-binding proteins KIF21A and CLASPs, whereas PPFIA1, PPFIBP1 and ERC1/ELKS serve as scaffolds for protein clustering. In terms of tissue distribution, expressed at postsynaptic membranes of skeletal neuromuscular junctions (at protein level).

It is found in the cytoplasm. It localises to the membrane. The protein localises to the cell projection. The protein resides in the podosome. Its subcellular location is the cell cortex. Its function is as follows. Seems to be involved in the assembly of the postsynaptic apparatus. May play a role in acetyl-choline receptor (AChR) aggregation in the postsynaptic membrane. The sequence is that of Pleckstrin homology-like domain family B member 2 (Phldb2) from Mus musculus (Mouse).